The chain runs to 340 residues: MKRVNVIQAKAFLKVIALLVPLLLNANGPAFALTEQASTPPHDSVASVSAPTAEAAVAAHAHGEEKAGDVIMHHILDNDVFSFEPFGEVHLPKIPPIAGVDISITKHVVMLWVVSAILLILFSLVGSKYKKMTARQAPTGLVNAMEALVEFIRIDVAKANIGVGYEKYLNYLLTVFFFVLLCNLLGLVPYGATATGNINVTLTLATFTFFITQVAALKAHGIKGYLAHLTGGTHPALWIIMIPIEFIGLFTKPVALTIRLFANMTAGHIVILSLIFISFILQSYIVAVVMSVPFSIFIYLLELFVAFLQAFIFTMLSSLFIGLASAHEGHEEHEAGVAHH.

The signal sequence occupies residues 1 to 32 (MKRVNVIQAKAFLKVIALLVPLLLNANGPAFA). The next 6 helical transmembrane spans lie at 107–127 (HVVM…LVGS), 172–192 (LLTV…PYGA), 197–217 (NINV…VAAL), 236–256 (ALWI…PVAL), 269–289 (IVIL…VAVV), and 296–316 (IFIY…FTML).

It belongs to the ATPase A chain family. F-type ATPases have 2 components, CF(1) - the catalytic core - and CF(0) - the membrane proton channel. CF(1) has five subunits: alpha(3), beta(3), gamma(1), delta(1), epsilon(1). CF(0) has four main subunits: a, b, b' and c.

The protein localises to the cell inner membrane. Functionally, key component of the proton channel; it plays a direct role in the translocation of protons across the membrane. The chain is ATP synthase subunit a from Pelodictyon phaeoclathratiforme (strain DSM 5477 / BU-1).